Here is a 93-residue protein sequence, read N- to C-terminus: Large ribosomal subunit protein uL23 (93 aa).

Belongs to the universal ribosomal protein uL23 family. Part of the 50S ribosomal subunit. Contacts protein L29, and trigger factor when it is bound to the ribosome.

Its function is as follows. One of the early assembly proteins it binds 23S rRNA. One of the proteins that surrounds the polypeptide exit tunnel on the outside of the ribosome. Forms the main docking site for trigger factor binding to the ribosome. The protein is Large ribosomal subunit protein uL23 of Nitratiruptor sp. (strain SB155-2).